A 208-amino-acid chain; its full sequence is 7-carboxy-7-deazaguanine synthase (208 aa).

Residues 23–25 and Arg-38 contribute to the substrate site; that span reads LQG. A Radical SAM core domain is found at 29 to 208; that stretch reads WAGGNAFFIR…LQTHKYLGVR (180 aa). [4Fe-4S] cluster-binding residues include Cys-42, Cys-46, and Cys-49. Position 83 (Thr-83) interacts with substrate. S-adenosyl-L-methionine is bound by residues Gly-85 and 126 to 128; that span reads SPK.

The protein belongs to the radical SAM superfamily. 7-carboxy-7-deazaguanine synthase family. As to quaternary structure, homodimer. The cofactor is [4Fe-4S] cluster. It depends on S-adenosyl-L-methionine as a cofactor. Mg(2+) is required as a cofactor.

The enzyme catalyses 6-carboxy-5,6,7,8-tetrahydropterin + H(+) = 7-carboxy-7-deazaguanine + NH4(+). It participates in purine metabolism; 7-cyano-7-deazaguanine biosynthesis. In terms of biological role, catalyzes the complex heterocyclic radical-mediated conversion of 6-carboxy-5,6,7,8-tetrahydropterin (CPH4) to 7-carboxy-7-deazaguanine (CDG), a step common to the biosynthetic pathways of all 7-deazapurine-containing compounds. This chain is 7-carboxy-7-deazaguanine synthase, found in Synechocystis sp. (strain ATCC 27184 / PCC 6803 / Kazusa).